A 320-amino-acid chain; its full sequence is Cytochrome f (320 aa).

An N-terminal signal peptide occupies residues 1–35; sequence MQTRNAFSWLKKQITRSISVSLMIYILTRTSISSA. Positions 36, 56, 59, and 60 each coordinate heme. A helical transmembrane segment spans residues 286–305; sequence VQGLLFFLASVILAQIFLVL.

The protein belongs to the cytochrome f family. As to quaternary structure, the 4 large subunits of the cytochrome b6-f complex are cytochrome b6, subunit IV (17 kDa polypeptide, petD), cytochrome f and the Rieske protein, while the 4 small subunits are PetG, PetL, PetM and PetN. The complex functions as a dimer. The cofactor is heme.

The protein localises to the plastid. It localises to the chloroplast thylakoid membrane. Functionally, component of the cytochrome b6-f complex, which mediates electron transfer between photosystem II (PSII) and photosystem I (PSI), cyclic electron flow around PSI, and state transitions. The polypeptide is Cytochrome f (Atropa belladonna (Belladonna)).